Consider the following 56-residue polypeptide: Large ribosomal subunit protein bL32 (56 aa).

It belongs to the bacterial ribosomal protein bL32 family.

The polypeptide is Large ribosomal subunit protein bL32 (Edwardsiella ictaluri (strain 93-146)).